The following is a 110-amino-acid chain: Large ribosomal subunit protein uL24 (110 aa).

It belongs to the universal ribosomal protein uL24 family. In terms of assembly, part of the 50S ribosomal subunit.

In terms of biological role, one of two assembly initiator proteins, it binds directly to the 5'-end of the 23S rRNA, where it nucleates assembly of the 50S subunit. Functionally, one of the proteins that surrounds the polypeptide exit tunnel on the outside of the subunit. The polypeptide is Large ribosomal subunit protein uL24 (Roseiflexus castenholzii (strain DSM 13941 / HLO8)).